The sequence spans 2289 residues: DNA polymerase II large subunit (2289 aa).

Disordered stretches follow at residues 279-330 (IGSD…SPRA) and 544-563 (SDTN…NTDD). Basic and acidic residues predominate over residues 292–304 (GEADIVKTDKDTN). Over residues 305–318 (ESETEDGIDNDDYN) the composition is skewed to acidic residues. The segment covering 544-557 (SDTNSASGNTSLRA) has biased composition (polar residues). 2 consecutive DOD-type homing endonuclease domains span residues 1222-1367 (LLGY…RLGI) and 1755-1911 (LLGQ…RLGV).

The protein belongs to the archaeal DNA polymerase II family. Heterodimer of a large subunit and a small subunit. This protein undergoes a protein self splicing that involves a post-translational excision of the intervening region (intein) followed by peptide ligation.

It carries out the reaction DNA(n) + a 2'-deoxyribonucleoside 5'-triphosphate = DNA(n+1) + diphosphate. The enzyme catalyses Exonucleolytic cleavage in the 3'- to 5'-direction to yield nucleoside 5'-phosphates.. Possesses two activities: a DNA synthesis (polymerase) and an exonucleolytic activity that degrades single-stranded DNA in the 3'- to 5'-direction. Has a template-primer preference which is characteristic of a replicative DNA polymerase. The polypeptide is DNA polymerase II large subunit (Haloquadratum walsbyi (strain DSM 16790 / HBSQ001)).